A 297-amino-acid chain; its full sequence is Elongation factor Ts (297 aa).

The tract at residues 82 to 85 (TDFV) is involved in Mg(2+) ion dislocation from EF-Tu. Over residues 223–265 (AQTAAAAETAPPEVSEPEPAAAVTAEEPTPEPVAAAEQPAEPV) the composition is skewed to low complexity. Residues 223-297 (AQTAAAAETA…GKSRSNKKKK (75 aa)) form a disordered region. The span at 286–297 (SGGKSRSNKKKK) shows a compositional bias: basic residues.

It belongs to the EF-Ts family.

Its subcellular location is the cytoplasm. Functionally, associates with the EF-Tu.GDP complex and induces the exchange of GDP to GTP. It remains bound to the aminoacyl-tRNA.EF-Tu.GTP complex up to the GTP hydrolysis stage on the ribosome. The protein is Elongation factor Ts of Thermosynechococcus vestitus (strain NIES-2133 / IAM M-273 / BP-1).